Here is a 261-residue protein sequence, read N- to C-terminus: Matrix metalloproteinase-26 (261 aa).

An N-terminal signal peptide occupies residues 1-17; that stretch reads MQLVILRVTIFLPWCFA. A propeptide spanning residues 18-89 is cleaved from the precursor; sequence VPVPPAADHK…PHCGVPDGSD (72 aa). A glycan (N-linked (GlcNAc...) asparagine) is linked at asparagine 64. Positions 80–87 match the Cysteine switch motif; it reads PHCGVPDG. Residues cysteine 82 and histidine 208 each contribute to the Zn(2+) site. Glutamate 209 is a catalytic residue. Positions 212 and 218 each coordinate Zn(2+). Residue asparagine 221 is glycosylated (N-linked (GlcNAc...) asparagine).

The protein belongs to the peptidase M10A family. Zn(2+) is required as a cofactor. The cofactor is Ca(2+). In terms of tissue distribution, expressed specifically in uterus and placenta. Is also widely expressed in malignant tumors from different sources as well as in diverse tumor cell lines.

It is found in the secreted. The protein resides in the extracellular space. The protein localises to the extracellular matrix. In terms of biological role, may hydrolyze collagen type IV, fibronectin, fibrinogen, beta-casein, type I gelatin and alpha-1 proteinase inhibitor. Is also able to activate progelatinase B. The chain is Matrix metalloproteinase-26 (MMP26) from Homo sapiens (Human).